Consider the following 455-residue polypeptide: MPNIDTATMTPREIVQELDRHIVGQHDAKRAVAIALRNRWRRMQLPEELRNEVMPKNILMIGPTGVGKTEIARRLATLANAPFVKVEATRFTEVGYVGKDVEQIIRDLADTSVKLYREQAKVRVRNQAEERAEDRILDALLPRRSAGIGFDPEAARHEPSAQDNETRIKFRRMLRNGELDEREIELEVAVNASMDIMTPPGMEEMGQQLRQMFSNLGGGKSQKRKLTIKAARPLLIEEEAGKLVNEDDIRTAAIEACEQHGIVFIDEIDKVAKRGEAGSSGGDVSREGVQRDLLPLVEGSNVSTKYGTVKTDHILFIASGAFHLAKPSDLIPELQGRFPIRVELTALTKADFVRILTEPKAALIKQYEALLQTEGVALTFGADAVDRLAEIAAQVNERQENIGARRLHTVLERLLDVLSYEAPDRDGQSVTVDAAYVDAQLGELVQDPDLSRYIL.

Residues Val-23, 65-70, Asp-266, Glu-333, and Arg-405 contribute to the ATP site; that span reads GVGKTE.

Belongs to the ClpX chaperone family. HslU subfamily. In terms of assembly, a double ring-shaped homohexamer of HslV is capped on each side by a ring-shaped HslU homohexamer. The assembly of the HslU/HslV complex is dependent on binding of ATP.

Its subcellular location is the cytoplasm. ATPase subunit of a proteasome-like degradation complex; this subunit has chaperone activity. The binding of ATP and its subsequent hydrolysis by HslU are essential for unfolding of protein substrates subsequently hydrolyzed by HslV. HslU recognizes the N-terminal part of its protein substrates and unfolds these before they are guided to HslV for hydrolysis. This chain is ATP-dependent protease ATPase subunit HslU, found in Xanthomonas campestris pv. campestris (strain 8004).